Here is a 396-residue protein sequence, read N- to C-terminus: Transcription factor E2FC (396 aa).

The span at 34–48 (PRYSSLTPSSTNRPF) shows a compositional bias: polar residues. A disordered region spans residues 34–57 (PRYSSLTPSSTNRPFSVSQSLPNS). The DNA-binding element occupies 155–220 (RYDSSLGLLT…TTKNHIRWKG (66 aa)). Positions 226-268 (QKDLGDQISRLKSEVESMQSEESRLDDLIRERQEALRSLEEDD) form a coiled coil. Residues 236–264 (LKSEVESMQSEESRLDDLIRERQEALRSL) form a leucine-zipper region. The segment at 376–391 (DYWFESDAEVSLTDLW) is retinoblastoma protein binding.

Belongs to the E2F/DP family. Heterodimer with DP proteins. Interacts preferentially with DPB, but also with DPA. No interaction with DPB when phosphorylated. Interacts with SKP2A, CDKA-1 and maize retinoblastoma-related protein RBR1. Component of a DREAM-like complex which modulates a variety of developmentally regulated genes and of the mitotic genes in proliferating and differentiated cells. Interacts with MYB3R3 at later stages of leaves development. Post-translationally, phosphorylated by cyclin-dependent kinase. Phosphorylation is necessary to target E2FC for proteolysis. In terms of tissue distribution, expressed in meristematic areas, vascular tissues, apical part of the roots, cotyledons, upper region of the hypocotyls, trichomes, young flower buds and pollen grains.

Its subcellular location is the cytoplasm. Involved in transcriptional repression. May act by repressing E2F-regulated genes in mature differentiated cells, but is not an antagonist of E2FA. Restricts cell division and is involved in the coordination between cell proliferation and endoreduplication during development. May play a role during the transition from skotomorphogenesis to photomorphogenesis. Regulated by phosphorylation-dependent proteolysis via the protein-ubiquitin ligase SCF(SKP2A) complex. The polypeptide is Transcription factor E2FC (E2FC) (Arabidopsis thaliana (Mouse-ear cress)).